The following is a 174-amino-acid chain: Co-chaperone protein HscB homolog (174 aa).

The J domain occupies 2–74; the sequence is NYFELFSLLP…IQRAEHLLTL (73 aa).

The protein belongs to the HscB family. In terms of assembly, interacts with HscA and stimulates its ATPase activity.

Functionally, co-chaperone involved in the maturation of iron-sulfur cluster-containing proteins. Seems to help targeting proteins to be folded toward HscA. The polypeptide is Co-chaperone protein HscB homolog (Shewanella halifaxensis (strain HAW-EB4)).